A 331-amino-acid chain; its full sequence is Ribosomal RNA small subunit methyltransferase H (331 aa).

Residues 38 to 40 (GGY), aspartate 56, phenylalanine 83, aspartate 100, and glutamine 107 each bind S-adenosyl-L-methionine. The interval 287–331 (DEAELAENPRARSARLRVGVRTDAPAGKVDPQALGTPLIPKKGRR) is disordered.

The protein belongs to the methyltransferase superfamily. RsmH family.

The protein localises to the cytoplasm. The catalysed reaction is cytidine(1402) in 16S rRNA + S-adenosyl-L-methionine = N(4)-methylcytidine(1402) in 16S rRNA + S-adenosyl-L-homocysteine + H(+). Functionally, specifically methylates the N4 position of cytidine in position 1402 (C1402) of 16S rRNA. The sequence is that of Ribosomal RNA small subunit methyltransferase H from Cereibacter sphaeroides (strain KD131 / KCTC 12085) (Rhodobacter sphaeroides).